We begin with the raw amino-acid sequence, 208 residues long: N-(5'-phosphoribosyl)anthranilate isomerase (208 aa).

This sequence belongs to the TrpF family.

It catalyses the reaction N-(5-phospho-beta-D-ribosyl)anthranilate = 1-(2-carboxyphenylamino)-1-deoxy-D-ribulose 5-phosphate. It participates in amino-acid biosynthesis; L-tryptophan biosynthesis; L-tryptophan from chorismate: step 3/5. The protein is N-(5'-phosphoribosyl)anthranilate isomerase of Neisseria meningitidis serogroup B (strain ATCC BAA-335 / MC58).